Reading from the N-terminus, the 1960-residue chain is Myosin-9 (1960 aa).

Ala2 carries the N-acetylalanine modification. Positions 2–838 (AQQAADKYLY…RLFTKVKPLL (837 aa)) are mediates interaction with LIMCH1. The residue at position 8 (Lys8) is an N6-acetyllysine. A Phosphotyrosine modification is found at Tyr11. Residues 27–77 (AAKKLVWVPSSKNGFEPASLKEEVGEEAIVELVENGKKVKVNKDDIQKMNP) form the Myosin N-terminal SH3-like domain. In terms of domain architecture, Myosin motor spans 81–776 (SKVEDMAELT…VLAHLEEERD (696 aa)). Lys102 is modified (N6-acetyllysine). 174 to 181 (GESGAGKT) is a binding site for ATP. N6-acetyllysine occurs at positions 299, 435, and 613. Ser628 carries the phosphoserine modification. An actin-binding region spans residues 654 to 676 (LAKLMATLRNTNPNFVRCIIPNH). Tyr754 is subject to Phosphotyrosine. The IQ domain maps to 779–808 (ITDVIIGFQACCRGYLARKAFAKRQQQLTA). Residues 841–1926 (IRHEDELLAK…LKNKLRRGDL (1086 aa)) adopt a coiled-coil conformation. An N6-succinyllysine modification is found at Lys850. Residues Lys860, Lys975, and Lys1024 each carry the N6-acetyllysine modification. The segment covering 1035–1055 (RLRREEKQRQELEKTRRKLEG) has biased composition (basic and acidic residues). The interval 1035–1057 (RLRREEKQRQELEKTRRKLEGDS) is disordered. Ser1114 carries the post-translational modification Phosphoserine. The segment at 1117-1167 (QEDLESERASRNKAEKQKRDLGEELEALKTELEDTLDSTAAQQELRSKREQ) is disordered. Positions 1122–1148 (SERASRNKAEKQKRDLGEELEALKTEL) are enriched in basic and acidic residues. An N6-acetyllysine mark is found at Lys1234 and Lys1249. The disordered stretch occupies residues 1327–1352 (LSTKLKQMEDEKNSFREQLEEEEEAK). A compositionally biased stretch (basic and acidic residues) spans 1332–1352 (KQMEDEKNSFREQLEEEEEAK). 6 positions are modified to N6-acetyllysine: Lys1357, Lys1392, Lys1404, Lys1410, Lys1459, and Lys1638. The residue at position 1669 (Lys1669) is an N6-succinyllysine. At Ser1714 the chain carries Phosphoserine. The tract at residues 1768–1788 (LERSHAQKNENARQQLERQNK) is disordered. N6-acetyllysine occurs at positions 1793, 1802, and 1845. The segment at 1877–1908 (RQLEEAEEEAQRANASRRKLQRELEDATETAD) is disordered. Arg1923 is subject to Omega-N-methylarginine. Residue Thr1939 is modified to Phosphothreonine. The tract at residues 1939 to 1960 (TGDCSDEEVDGKADGADAKAAE) is disordered. At Ser1943 the chain carries Phosphoserine. Positions 1948-1960 (DGKADGADAKAAE) are enriched in basic and acidic residues.

It belongs to the TRAFAC class myosin-kinesin ATPase superfamily. Myosin family. Myosin is a hexameric protein that consists of 2 heavy chain subunits (MHC), 2 alkali light chain subunits (MLC) and 2 regulatory light chain subunits (MLC-2). Interacts with RASIP1. Interacts with DDR1. Interacts with PDLIM2. Interacts with SVIL. Interacts with HTRA3. Interacts with Myo7a. Interacts with CFAP95. Interacts with LIMCH1; independently of the integration of MYH9 into the myosin complex. Interacts with RAB3A. Interacts with ZBED4. Interacts with S100A4; this interaction increases cell motility. Post-translationally, ISGylated. Ubiquitination.

Its subcellular location is the cytoplasm. The protein localises to the cytoskeleton. It localises to the cell cortex. The protein resides in the cytoplasmic vesicle. It is found in the secretory vesicle. Its subcellular location is the cortical granule. Its function is as follows. Cellular myosin that appears to play a role in cytokinesis, cell shape, and specialized functions such as secretion and capping. Required for cortical actin clearance prior to oocyte exocytosis. Promotes cell motility in conjunction with S100A4. During cell spreading, plays an important role in cytoskeleton reorganization, focal contact formation (in the margins but not the central part of spreading cells), and lamellipodial retraction; this function is mechanically antagonized by MYH10. The polypeptide is Myosin-9 (Myh9) (Mus musculus (Mouse)).